The sequence spans 78 residues: MSNLEERVKKIIVEQLGVDESEVKNEASFVDDLGADSLDTVELVMALEEEFDTEIPDEEAEKITTVQAAIDYVTANAQ.

One can recognise a Carrier domain in the interval 2 to 77 (SNLEERVKKI…AAIDYVTANA (76 aa)). Serine 37 carries the O-(pantetheine 4'-phosphoryl)serine modification.

Belongs to the acyl carrier protein (ACP) family. 4'-phosphopantetheine is transferred from CoA to a specific serine of apo-ACP by AcpS. This modification is essential for activity because fatty acids are bound in thioester linkage to the sulfhydryl of the prosthetic group.

The protein localises to the cytoplasm. It participates in lipid metabolism; fatty acid biosynthesis. Carrier of the growing fatty acid chain in fatty acid biosynthesis. The sequence is that of Acyl carrier protein from Vibrio vulnificus (strain CMCP6).